Consider the following 95-residue polypeptide: Aspartyl/glutamyl-tRNA(Asn/Gln) amidotransferase subunit C (95 aa).

Belongs to the GatC family. Heterotrimer of A, B and C subunits.

The enzyme catalyses L-glutamyl-tRNA(Gln) + L-glutamine + ATP + H2O = L-glutaminyl-tRNA(Gln) + L-glutamate + ADP + phosphate + H(+). The catalysed reaction is L-aspartyl-tRNA(Asn) + L-glutamine + ATP + H2O = L-asparaginyl-tRNA(Asn) + L-glutamate + ADP + phosphate + 2 H(+). In terms of biological role, allows the formation of correctly charged Asn-tRNA(Asn) or Gln-tRNA(Gln) through the transamidation of misacylated Asp-tRNA(Asn) or Glu-tRNA(Gln) in organisms which lack either or both of asparaginyl-tRNA or glutaminyl-tRNA synthetases. The reaction takes place in the presence of glutamine and ATP through an activated phospho-Asp-tRNA(Asn) or phospho-Glu-tRNA(Gln). In Ruegeria sp. (strain TM1040) (Silicibacter sp.), this protein is Aspartyl/glutamyl-tRNA(Asn/Gln) amidotransferase subunit C.